We begin with the raw amino-acid sequence, 383 residues long: 8-amino-7-oxononanoate synthase (383 aa).

Substrate contacts are provided by R27 and R34. Residue 114-115 coordinates pyridoxal 5'-phosphate; it reads GY. H139 serves as a coordination point for substrate. Pyridoxal 5'-phosphate contacts are provided by residues S187, 212–215, and 232–235; these read DDAH and TLSK. Residue K235 is modified to N6-(pyridoxal phosphate)lysine. Residue T344 coordinates substrate.

This sequence belongs to the class-II pyridoxal-phosphate-dependent aminotransferase family. BioF subfamily. In terms of assembly, homodimer. Pyridoxal 5'-phosphate is required as a cofactor.

It carries out the reaction 6-carboxyhexanoyl-[ACP] + L-alanine + H(+) = (8S)-8-amino-7-oxononanoate + holo-[ACP] + CO2. It functions in the pathway cofactor biosynthesis; biotin biosynthesis. Catalyzes the decarboxylative condensation of pimeloyl-[acyl-carrier protein] and L-alanine to produce 8-amino-7-oxononanoate (AON), [acyl-carrier protein], and carbon dioxide. This is 8-amino-7-oxononanoate synthase from Methylorubrum extorquens (strain CM4 / NCIMB 13688) (Methylobacterium extorquens).